The sequence spans 349 residues: S-adenosylmethionine decarboxylase proenzyme 3 (349 aa).

Catalysis depends on residues E9 and E12. Substrate is bound at residue E68. S69 serves as the catalytic Schiff-base intermediate with substrate; via pyruvic acid. S69 bears the Pyruvic acid (Ser); by autocatalysis mark. C83 functions as the Proton donor; for catalytic activity in the catalytic mechanism. Residues S235 and H248 each act as proton acceptor; for processing activity in the active site. E252 serves as a coordination point for substrate.

The protein belongs to the eukaryotic AdoMetDC family. Pyruvate is required as a cofactor. In terms of processing, is synthesized initially as an inactive proenzyme. Formation of the active enzyme involves a self-maturation process in which the active site pyruvoyl group is generated from an internal serine residue via an autocatalytic post-translational modification. Two non-identical subunits are generated from the proenzyme in this reaction, and the pyruvate is formed at the N-terminus of the alpha chain, which is derived from the carboxyl end of the proenzyme. The post-translation cleavage follows an unusual pathway, termed non-hydrolytic serinolysis, in which the side chain hydroxyl group of the serine supplies its oxygen atom to form the C-terminus of the beta chain, while the remainder of the serine residue undergoes an oxidative deamination to produce ammonia and the pyruvoyl group blocking the N-terminus of the alpha chain.

The catalysed reaction is S-adenosyl-L-methionine + H(+) = S-adenosyl 3-(methylsulfanyl)propylamine + CO2. It functions in the pathway amine and polyamine biosynthesis; S-adenosylmethioninamine biosynthesis; S-adenosylmethioninamine from S-adenosyl-L-methionine: step 1/1. Functionally, essential for biosynthesis of the polyamines spermidine and spermine. Essential for polyamine homeostasis, and normal plant embryogenesis, growth and development. This chain is S-adenosylmethionine decarboxylase proenzyme 3, found in Arabidopsis thaliana (Mouse-ear cress).